A 441-amino-acid chain; its full sequence is tRNA modification GTPase MnmE (441 aa).

Arginine 21, glutamate 79, and lysine 118 together coordinate (6S)-5-formyl-5,6,7,8-tetrahydrofolate. Positions 214–370 (GFKIAIVGKP…LEGYLKTQDT (157 aa)) constitute a TrmE-type G domain. GTP is bound by residues 224-229 (NVGKSS), 243-249 (SDEAGTT), and 268-271 (DTAG). Serine 228 and threonine 249 together coordinate Mg(2+). Residue lysine 441 participates in (6S)-5-formyl-5,6,7,8-tetrahydrofolate binding.

It belongs to the TRAFAC class TrmE-Era-EngA-EngB-Septin-like GTPase superfamily. TrmE GTPase family. Homodimer. Heterotetramer of two MnmE and two MnmG subunits. The cofactor is K(+).

It is found in the cytoplasm. Exhibits a very high intrinsic GTPase hydrolysis rate. Involved in the addition of a carboxymethylaminomethyl (cmnm) group at the wobble position (U34) of certain tRNAs, forming tRNA-cmnm(5)s(2)U34. The chain is tRNA modification GTPase MnmE from Campylobacter concisus (strain 13826).